Here is a 39-residue protein sequence, read N- to C-terminus: Photosystem II reaction center protein L (39 aa).

The helical transmembrane segment at R16–F37 threads the bilayer.

The protein belongs to the PsbL family. As to quaternary structure, PSII is composed of 1 copy each of membrane proteins PsbA, PsbB, PsbC, PsbD, PsbE, PsbF, PsbH, PsbI, PsbJ, PsbK, PsbL, PsbM, PsbT, PsbX, PsbY, PsbZ, Psb30/Ycf12, peripheral proteins PsbO, CyanoQ (PsbQ), PsbU, PsbV and a large number of cofactors. It forms dimeric complexes.

Its subcellular location is the cellular thylakoid membrane. Functionally, one of the components of the core complex of photosystem II (PSII). PSII is a light-driven water:plastoquinone oxidoreductase that uses light energy to abstract electrons from H(2)O, generating O(2) and a proton gradient subsequently used for ATP formation. It consists of a core antenna complex that captures photons, and an electron transfer chain that converts photonic excitation into a charge separation. This subunit is found at the monomer-monomer interface and is required for correct PSII assembly and/or dimerization. Required for PSII activity, at least in part due to its effects on PSII assembly. May make specific contact(s) with lipids. The sequence is that of Photosystem II reaction center protein L from Synechocystis sp. (strain ATCC 27184 / PCC 6803 / Kazusa).